Reading from the N-terminus, the 458-residue chain is UDP-N-acetylmuramate--L-alanine ligase (458 aa).

112 to 118 (GTHGKTT) serves as a coordination point for ATP.

The protein belongs to the MurCDEF family.

It localises to the cytoplasm. The enzyme catalyses UDP-N-acetyl-alpha-D-muramate + L-alanine + ATP = UDP-N-acetyl-alpha-D-muramoyl-L-alanine + ADP + phosphate + H(+). It functions in the pathway cell wall biogenesis; peptidoglycan biosynthesis. Functionally, cell wall formation. The chain is UDP-N-acetylmuramate--L-alanine ligase from Syntrophotalea carbinolica (strain DSM 2380 / NBRC 103641 / GraBd1) (Pelobacter carbinolicus).